Here is a 392-residue protein sequence, read N- to C-terminus: NDP-glycosyltransferase YjiC (392 aa).

UDP contacts are provided by residues Asn-18, Thr-229, Ser-255, Val-278, His-293, and 297-301 (NSTME).

Belongs to the UDP-glycosyltransferase family. As to quaternary structure, monomer.

The enzyme catalyses an NDP-glycose + an acceptor = a glycosylated acceptor + NDP.. With respect to regulation, activity is improved in the presence of Mn(2+), Mg(2+) and Ca(2+), and inhibited by Ni(2+), Zn(2+) and Cu(2+). Its function is as follows. Glycosyltransferase that can glycosylate a wide range of substrates, including various flavonoids, phenyl ketones, curcuminoid, lignins, zingerone, triterpenes, stilbene and anthraquinone, using UDP-glucose or ADP-glucose as sugar donor. It also exhibits O-, N- and S-glycosylation activities towards simple aromatics. In vivo, the broad acceptor tolerance of YjiC might function as a detoxification agent against exogenous xenobiotics to make the strain adaptable to the changeable environment. In Bacillus subtilis (strain 168), this protein is NDP-glycosyltransferase YjiC (yjiC).